The primary structure comprises 279 residues: MTKADQIFKANIQKIINEGSLSEQARPKYKDGRTAHSKYITGAFAEYDLAKGEFPITTLRPIPIKSAIKELFWIYQDQSNSLDVLEAKYNVHYWNEWEVDQTRTIGQRYGAVVKKHDIISKILKQLAENPWNRRNVISLWDYEAFEETKGLLPCAFQIMFDVRRVGEDLYLDASLTQRSNDILVAHHINAMQYVALQMMIAKHFGWKIGKFFYFVNNLHIYDNQFDQAQELLKRQPVASQPKLVLNVPDRTNFFDIKPDDFELQNYDPVKPQLHFDLAI.

Arg133 to Arg134 is a dUMP binding site. Cys154 functions as the Nucleophile in the catalytic mechanism. Residues Arg178–Asp181, Asn189, and His219–Tyr221 each bind dUMP. Residue Asp181 participates in (6R)-5,10-methylene-5,6,7,8-tetrahydrofolate binding. Ala278 is a binding site for (6R)-5,10-methylene-5,6,7,8-tetrahydrofolate.

The protein belongs to the thymidylate synthase family. Bacterial-type ThyA subfamily. In terms of assembly, homodimer.

The protein localises to the cytoplasm. The enzyme catalyses dUMP + (6R)-5,10-methylene-5,6,7,8-tetrahydrofolate = 7,8-dihydrofolate + dTMP. The protein operates within pyrimidine metabolism; dTTP biosynthesis. Functionally, catalyzes the reductive methylation of 2'-deoxyuridine-5'-monophosphate (dUMP) to 2'-deoxythymidine-5'-monophosphate (dTMP) while utilizing 5,10-methylenetetrahydrofolate (mTHF) as the methyl donor and reductant in the reaction, yielding dihydrofolate (DHF) as a by-product. This enzymatic reaction provides an intracellular de novo source of dTMP, an essential precursor for DNA biosynthesis. This Streptococcus pyogenes serotype M3 (strain SSI-1) protein is Thymidylate synthase.